The chain runs to 91 residues: Small ribosomal subunit protein uS15 (91 aa).

The protein belongs to the universal ribosomal protein uS15 family. As to quaternary structure, part of the 30S ribosomal subunit. Forms a bridge to the 50S subunit in the 70S ribosome, contacting the 23S rRNA.

One of the primary rRNA binding proteins, it binds directly to 16S rRNA where it helps nucleate assembly of the platform of the 30S subunit by binding and bridging several RNA helices of the 16S rRNA. Functionally, forms an intersubunit bridge (bridge B4) with the 23S rRNA of the 50S subunit in the ribosome. The chain is Small ribosomal subunit protein uS15 from Legionella pneumophila (strain Corby).